Reading from the N-terminus, the 127-residue chain is Protein ApaG (127 aa).

In terms of domain architecture, ApaG spans Asn-3–His-127.

The protein is Protein ApaG of Nitrosomonas eutropha (strain DSM 101675 / C91 / Nm57).